The sequence spans 157 residues: Cyclic pyranopterin monophosphate synthase (157 aa).

Substrate contacts are provided by residues 74–76 (MCH) and 111–112 (ME). The active site involves D126.

Belongs to the MoaC family. In terms of assembly, homohexamer; trimer of dimers.

The catalysed reaction is (8S)-3',8-cyclo-7,8-dihydroguanosine 5'-triphosphate = cyclic pyranopterin phosphate + diphosphate. The protein operates within cofactor biosynthesis; molybdopterin biosynthesis. Functionally, catalyzes the conversion of (8S)-3',8-cyclo-7,8-dihydroguanosine 5'-triphosphate to cyclic pyranopterin monophosphate (cPMP). The polypeptide is Cyclic pyranopterin monophosphate synthase (Carboxydothermus hydrogenoformans (strain ATCC BAA-161 / DSM 6008 / Z-2901)).